A 207-amino-acid polypeptide reads, in one-letter code: Small ribosomal subunit protein uS4A (207 aa).

The S4 RNA-binding domain maps to 98–163 (TRLDNLVYRL…SPKFKELKEN (66 aa)).

Belongs to the universal ribosomal protein uS4 family. As to quaternary structure, part of the 30S ribosomal subunit. Contacts protein S5. The interaction surface between S4 and S5 is involved in control of translational fidelity.

One of the primary rRNA binding proteins, it binds directly to 16S rRNA where it nucleates assembly of the body of the 30S subunit. Its function is as follows. With S5 and S12 plays an important role in translational accuracy. This Alkaliphilus metalliredigens (strain QYMF) protein is Small ribosomal subunit protein uS4A.